We begin with the raw amino-acid sequence, 550 residues long: Arginine--tRNA ligase (550 aa).

A 'HIGH' region motif is present at residues 122–132; the sequence is GNPTGPLHLAH.

This sequence belongs to the class-I aminoacyl-tRNA synthetase family. As to quaternary structure, monomer.

It is found in the cytoplasm. It carries out the reaction tRNA(Arg) + L-arginine + ATP = L-arginyl-tRNA(Arg) + AMP + diphosphate. The polypeptide is Arginine--tRNA ligase (Tropheryma whipplei (strain TW08/27) (Whipple's bacillus)).